The primary structure comprises 292 residues: MSPLMLRLLPLLCIIISAHFVPRPETSPSLVYEIGSTVTFHCRLNTTTNIQSVSWYNKSRLISNHEIQNMDNLSFTDDGYVFIHELNKINNLDVDSKLYFHIKHDRTTSLLKIKARSAYDATCLTCTFTVDNEKTSATSCLKLIMKPIVVLYFRYLNNFLDVTCTVTSYPKPNVVIKFLGEVYKRDIPMVRQNENGSSTVSVSFTFKRRTKLEFVGKTISCLASSWFTNQKASALVTSGEHTVQNHDEYSKEAVKGSNSDETVFTWIVPLILILIISVMVLLISMCIVAFKS.

A signal peptide spans 1–18; the sequence is MSPLMLRLLPLLCIIISA. The region spanning 24 to 136 is the Ig-like V-type domain; the sequence is PETSPSLVYE…TFTVDNEKTS (113 aa). The cysteines at positions 42 and 126 are disulfide-linked. N45, N57, N72, and N195 each carry an N-linked (GlcNAc...) asparagine; by host glycan. In terms of domain architecture, Ig-like C2-type spans 147-237; it reads PIVVLYFRYL…TNQKASALVT (91 aa). Residues 263 to 283 form a helical membrane-spanning segment; it reads VFTWIVPLILILIISVMVLLI.

The protein resides in the host membrane. This is Putative OX-2 membrane glycoprotein homolog (U85) from Human herpesvirus 6B (strain Z29) (HHV-6 variant B).